The following is a 315-amino-acid chain: Putative methyltransferase SPBC8D2.16c (315 aa).

This sequence belongs to the class IV-like SAM-binding methyltransferase superfamily.

The protein resides in the cytoplasm. The protein localises to the nucleus. The chain is Putative methyltransferase SPBC8D2.16c from Schizosaccharomyces pombe (strain 972 / ATCC 24843) (Fission yeast).